The chain runs to 886 residues: Phosphatidylinositol 3-kinase catalytic subunit type 3 (886 aa).

Residues 35–184 (YKAVLEDPML…LAKLTKAHRQ (150 aa)) form the C2 PI3K-type domain. A PIK helical domain is found at 283–519 (DHDLKPNAAT…PKTHEMYLNV (237 aa)). Positions 414–464 (GLEPTKKDSQGPMLESMTTSGINPETDSSQILSNPLPAVSSPAPPSKTKDG) are disordered. Over residues 429–444 (SMTTSGINPETDSSQI) the composition is skewed to polar residues. The span at 445-454 (LSNPLPAVSS) shows a compositional bias: low complexity. A PI3K/PI4K catalytic domain is found at 604–870 (IPEKATLFKS…LIDDSVNALF (267 aa)). Residues 610 to 616 (LFKSALM) form a G-loop region. The segment at 739–747 (GVGDRHLDN) is catalytic loop. The segment at 758-779 (HIDFGYILGRDPKPLPPPMKLN) is activation loop.

This sequence belongs to the PI3/PI4-kinase family. As to quaternary structure, component of the PI3K (PI3KC3/PI3K-III/class III phosphatidylinositol 3-kinase) complex the core of which is composed of the catalytic subunit pik3c3, the regulatory subunit pik3r4 and becn1 associating with additional regulatory/auxiliary subunits to form alternative complex forms. It depends on Mn(2+) as a cofactor.

The protein resides in the midbody. It catalyses the reaction a 1,2-diacyl-sn-glycero-3-phospho-(1D-myo-inositol) + ATP = a 1,2-diacyl-sn-glycero-3-phospho-(1D-myo-inositol-3-phosphate) + ADP + H(+). Catalytic subunit of the PI3K complex that mediates formation of phosphatidylinositol 3-phosphate; different complex forms are believed to play a role in multiple membrane trafficking pathways. Involved in the transport of lysosomal enzyme precursors to lysosomes. Required for transport from early to late endosomes. The chain is Phosphatidylinositol 3-kinase catalytic subunit type 3 (pik3c3) from Xenopus laevis (African clawed frog).